The sequence spans 427 residues: Tegument protein VP16 homolog (427 aa).

This sequence belongs to the herpesviridae tegument protein VP16 protein family.

The protein resides in the virion tegument. It is found in the host nucleus. Functionally, transcriptional activator of immediate-early (IE) gene products (alpha genes). Acts as a key activator of lytic infection by initiating the lytic program through the assembly of the transcriptional regulatory VP16-induced complex composed of VP16 and two cellular factors, HCFC1 and POU2F1. VP16-induced complex represents a regulatory switch: when it is on, it promotes IE-gene expression and thus lytic infection, and when it is off, it limits IE-gene transcription favoring latent infection. Its function is as follows. May play a role in the aggregation of tegument proteins around nucleocapsids during virus morphogenesis. The sequence is that of Tegument protein VP16 homolog (MDV061) from Gallus gallus (Chicken).